The primary structure comprises 84 residues: Inactive transposase YbfQ (84 aa).

The chain is Inactive transposase YbfQ (ybfQ) from Escherichia coli (strain K12).